Here is a 353-residue protein sequence, read N- to C-terminus: Photosystem II D2 protein (353 aa).

Thr-2 bears the N-acetylthreonine mark. Thr-2 is subject to Phosphothreonine. The helical transmembrane segment at 41–61 (CAYFALGGWFTGTTFVTSWYT) threads the bilayer. His-118 contributes to the chlorophyll a binding site. Residues 125 to 141 (GFMLRQFELARSVQLRP) traverse the membrane as a helical segment. Pheophytin a contacts are provided by Gln-130 and Asn-143. The helical transmembrane segment at 153–166 (VFVSVFLIYPLGQS) threads the bilayer. Chlorophyll a is bound at residue His-198. The helical transmembrane segment at 208-228 (AALLCAIHGATVENTLFEDGD) threads the bilayer. A plastoquinone is bound by residues His-215 and Phe-262. Position 215 (His-215) interacts with Fe cation. Residue His-269 coordinates Fe cation. A helical membrane pass occupies residues 279 to 295 (GSWMSAIGVVGLALNLR).

This sequence belongs to the reaction center PufL/M/PsbA/D family. In terms of assembly, PSII is composed of 1 copy each of membrane proteins PsbA, PsbB, PsbC, PsbD, PsbE, PsbF, PsbH, PsbI, PsbJ, PsbK, PsbL, PsbM, PsbT, PsbX, PsbY, PsbZ, Psb30/Ycf12, at least 3 peripheral proteins of the oxygen-evolving complex and a large number of cofactors. It forms dimeric complexes. Requires The D1/D2 heterodimer binds P680, chlorophylls that are the primary electron donor of PSII, and subsequent electron acceptors. It shares a non-heme iron and each subunit binds pheophytin, quinone, additional chlorophylls, carotenoids and lipids. There is also a Cl(-1) ion associated with D1 and D2, which is required for oxygen evolution. The PSII complex binds additional chlorophylls, carotenoids and specific lipids. as cofactor.

The protein localises to the plastid. It is found in the chloroplast thylakoid membrane. The enzyme catalyses 2 a plastoquinone + 4 hnu + 2 H2O = 2 a plastoquinol + O2. In terms of biological role, photosystem II (PSII) is a light-driven water:plastoquinone oxidoreductase that uses light energy to abstract electrons from H(2)O, generating O(2) and a proton gradient subsequently used for ATP formation. It consists of a core antenna complex that captures photons, and an electron transfer chain that converts photonic excitation into a charge separation. The D1/D2 (PsbA/PsbD) reaction center heterodimer binds P680, the primary electron donor of PSII as well as several subsequent electron acceptors. D2 is needed for assembly of a stable PSII complex. This Pinus koraiensis (Korean pine) protein is Photosystem II D2 protein.